The sequence spans 422 residues: Anhydromevalonate phosphate decarboxylase (422 aa).

2 residues coordinate Mn(2+): Asn134 and Glu197. Asp244 (proton acceptor) is an active-site residue.

Belongs to the UbiD family. It depends on prenylated FMN as a cofactor. The cofactor is Mn(2+).

It carries out the reaction (2E)-3-methyl-5-phosphooxypent-2-enoate + H(+) = isopentenyl phosphate + CO2. The protein operates within isoprenoid biosynthesis; isopentenyl diphosphate biosynthesis via mevalonate pathway. Catalyzes the conversion of trans-anhydromevalonate 5-phosphate (tAHMP) into isopentenyl phosphate. Involved in the archaeal mevalonate (MVA) pathway, which provides fundamental precursors for isoprenoid biosynthesis, such as isopentenyl diphosphate (IPP) and dimethylallyl diphosphate (DMAPP). The polypeptide is Anhydromevalonate phosphate decarboxylase (Methanosarcina mazei (strain ATCC BAA-159 / DSM 3647 / Goe1 / Go1 / JCM 11833 / OCM 88) (Methanosarcina frisia)).